Here is a 455-residue protein sequence, read N- to C-terminus: MMTKAPATAVYDTLSLLFDFPNQEQRLWWHSIAPMFAAMLDTAGHNVHDQYRHLGIFKKHIIPFLGVYPAQGKHTWPSVLTRYGIPFELSLNCLDSVVRYTFEPTTEHTGTGDDSYNAFAILECIQKLVRIQPGIDMEWFSYFRNELVLNATESARLGRNDSVNQQPIRTQNKLALDLKGDRFALKVYLYPHLKSIATGVSSHDLIFNSVRKLSQKHTSIQPSFNVLCDYVASRNDPDSNAAEAEAGVPASALRARLLSCDLVDPSKSRIKIYLLEQTVSLTAMEDLWTLGGRRTDSSTLNGLDMMRELWHLLQIPSGFMKYPESDLKLGEVPDEQLPSMVHYALHPDQPMPEPQVYFTVFGMSDAGITNALATFFSRHGWYEMAKKYRVFLEGSFPNHDFESLNYLHTYVSFSYRKNKPYLSVYLHSFETGQWPAFSDDPTAFNAFKRCDLSLT.

Residues 79–80 (VL) and Glu-88 contribute to the L-tryptophan site. The substrate site is built by Arg-99, Lys-186, and Tyr-188. The L-tryptophan site is built by Tyr-190 and Arg-256. Arg-269, Lys-271, Tyr-273, Gln-355, Tyr-357, Tyr-421, and Tyr-425 together coordinate substrate.

It belongs to the tryptophan dimethylallyltransferase family. Homodimer.

The enzyme catalyses L-tryptophan + dimethylallyl diphosphate = 4-(3-methylbut-2-enyl)-L-tryptophan + diphosphate. It participates in alkaloid biosynthesis; ergot alkaloid biosynthesis. Its function is as follows. Tryptophan dimethylallyltransferase; part of the gene cluster that mediates the biosynthesis of fungal ergot alkaloid. DmaW catalyzes the first step of ergot alkaloid biosynthesis by condensing dimethylallyl diphosphate (DMAP) and tryptophan to form 4-dimethylallyl-L-tryptophan. The second step is catalyzed by the methyltransferase easF that methylates 4-dimethylallyl-L-tryptophan in the presence of S-adenosyl-L-methionine, resulting in the formation of 4-dimethylallyl-L-abrine. The catalase easC and the FAD-dependent oxidoreductase easE then transform 4-dimethylallyl-L-abrine to chanoclavine-I which is further oxidized by easD in the presence of NAD(+), resulting in the formation of chanoclavine-I aldehyde. Agroclavine dehydrogenase easG then mediates the conversion of chanoclavine-I aldehyde to agroclavine via a non-enzymatic adduct reaction: the substrate is an iminium intermediate that is formed spontaneously from chanoclavine-I aldehyde in the presence of glutathione. Further conversion of agroclavine to paspalic acid is a two-step process involving oxidation of agroclavine to elymoclavine and of elymoclavine to paspalic acid, the second step being performed by the elymoclavine oxidase cloA. However, cloA does not encode a functional enzyme indicating that C.fusiformis terminates its ergot alkaloid pathway at elymoclavine. In Claviceps fusiformis (Ergot fungus), this protein is Tryptophan dimethylallyltransferase.